Reading from the N-terminus, the 167-residue chain is Single-stranded DNA-binding protein 2 (167 aa).

One can recognise an SSB domain in the interval 1-104; sequence MLNRVVLVGR…VVCDSVQFLE (104 aa). The disordered stretch occupies residues 107-167; it reads NAQQNGGQRQ…IDISDDDLPF (61 aa). Low complexity-rich tracts occupy residues 109 to 118 and 132 to 147; these read QQNGGQRQQN and SGQN…TKQS. An Important for interaction with partner proteins motif is present at residues 162-167; that stretch reads DDDLPF.

In terms of assembly, homotetramer.

In terms of biological role, plays an important role in DNA replication, recombination and repair. Binds to ssDNA and to an array of partner proteins to recruit them to their sites of action during DNA metabolism. This is Single-stranded DNA-binding protein 2 (ssb2) from Staphylococcus aureus (strain MSSA476).